A 354-amino-acid chain; its full sequence is Guanine nucleotide-binding protein G(o) subunit alpha (354 aa).

A lipid anchor (N-myristoyl glycine) is attached at Gly2. Cys3 carries the S-palmitoyl cysteine lipid modification. The G-alpha domain maps to 32–354 (KDVKLLLLGA…ANNLRGCGLY (323 aa)). Residues 35–48 (KLLLLGAGESGKST) are G1 motif. GTP contacts are provided by Glu43, Lys46, Ser47, Thr48, Ser152, Leu176, Arg177, Thr178, and Arg179. Ser47 lines the Mg(2+) pocket. The G2 motif stretch occupies residues 174 to 182 (DILRTRVKT). Thr182 serves as a coordination point for Mg(2+). The segment at 197–206 (FRLFDVGGQR) is G3 motif. Gln205 is modified (5-glutamyl histamine). The G4 motif stretch occupies residues 266-273 (ILFLNKKD). The GTP site is built by Asn270, Asp273, and Cys325. The segment at 324 to 329 (TCATDT) is G5 motif. Cys351 carries the S-palmitoyl cysteine lipid modification.

This sequence belongs to the G-alpha family. G(i/o/t/z) subfamily. As to quaternary structure, g proteins are composed of 3 units; alpha, beta and gamma. The alpha chain contains the guanine nucleotide binding site. Forms a complex with GNB1 and GNG3. Interacts with RGS14. Interacts with RGS16. Interacts with RGS19. Interacts (when palmitoylated) with ADGRG3. Post-translationally, histaminylated at Gln-205 residues by TGM2.

Its subcellular location is the cell membrane. It localises to the membrane. The enzyme catalyses GTP + H2O = GDP + phosphate + H(+). The GTPase activity is promoted by GTPAse activators, such as RGS14, RGS16 and RGS19. In terms of biological role, guanine nucleotide-binding proteins (G proteins) function as transducers downstream of G protein-coupled receptors (GPCRs) in numerous signaling cascades. The alpha chain contains the guanine nucleotide binding site and alternates between an active, GTP-bound state and an inactive, GDP-bound state. Signaling by an activated GPCR promotes GDP release and GTP binding. The alpha subunit has a low GTPase activity that converts bound GTP to GDP, thereby terminating the signal. Both GDP release and GTP hydrolysis are modulated by numerous regulatory proteins. Signaling is mediated via effector proteins, such as adenylate cyclase. Inhibits adenylate cyclase activity, leading to decreased intracellular cAMP levels. In Bos taurus (Bovine), this protein is Guanine nucleotide-binding protein G(o) subunit alpha (GNAO1).